Here is a 193-residue protein sequence, read N- to C-terminus: Large ribosomal subunit protein bL9 (193 aa).

The segment at 155–193 is disordered; it reads AEGETLTSAEAIYDIQEKPLAENQEEMNDNDANSINEQA. Residues 184–193 are compositionally biased toward polar residues; sequence NDANSINEQA.

This sequence belongs to the bacterial ribosomal protein bL9 family.

Its function is as follows. Binds to the 23S rRNA. The sequence is that of Large ribosomal subunit protein bL9 from Bartonella quintana (strain Toulouse) (Rochalimaea quintana).